Consider the following 896-residue polypeptide: MNYKDTLLMPKTDFEMRGNLGKREPEIQKHWESIDLYNKVLEKNKDNTPFVLHDGPPYANNNIHIGHAFQKTLKDFVLRYQTMSGRYTPYIPGWDTHGLPIENEVTKSGVDRKQLTRAEFRKICREYAIKQVEVQRAQFKRLGILGDWDNPYLTLDKSYIADQVRVFSQMVDKGIIYKGLKPIYWSPSSESAFAEAEIEYMDKQSKSIYVGFDMMGDKFPNTKLLIWTTTPWTLPANLAVSVHPNFDYVWFNNDGKNYIALKELLPKLVEKLGFSHAKVLKEFKGSTLEFMNYKHPLYDRVSPIILGEHVTAEDGTGLVHTAPGHGEDDYFVGKKYNLDLLSPVDEKGHMTEEAGPYAGMFYEKANAQIVEDLRENGHLLYDETITHSYPHDWRTKKPVIFRSTPQWFASIDMLKGDLLEAIKGVKWHTSWGEVRLTNMIKDRNDWVISRQRVWGVPIPIFYDNENNPLLDRKLIDHVASLFEVHGSDIWYEWDVEKLLPSDYEGPRDLTKELDIMDVWFDSGTSYNILKRRGLPFPADMYLEGSDQYRGWFNSSLTTAIAVDGVSPYKEIVSHGFVLDGKGRKMSKSLGNVIDPLTVMNDQGADVLRLWVASVDYEADVRISNDLMKQVSESYRKFRNTFRFMLGVLDGFNPEVNYIGWSMRGQLNRVMTDKYYVLATKVNESYAKYNFVEVTRLIIPFVVNDLSAFYLDYTKDSLYCDAEDDFERRAIQSTIYDILLGLLRLLTPIMPHTTSEAYDSLKYKEYDNIYLEKMPIGGKLKEPKLQENYDIFDELRNHVLKHLELAREAKVIGKSLDAHLDLSVDQTTYDALEYLDLLNKLDKILIVSSVHITKADQLDIKVSKADGHVCARCWNIVKEVNQNDVCVRCESVLEGLK.

Residues 57–67 (PYANNNIHIGH) carry the 'HIGH' region motif. Glu543 contributes to the L-isoleucyl-5'-AMP binding site. Positions 584–588 (KMSKS) match the 'KMSKS' region motif. Lys587 lines the ATP pocket. The Zn(2+) site is built by Cys869, Cys872, Cys885, and Cys888.

Belongs to the class-I aminoacyl-tRNA synthetase family. IleS type 1 subfamily. Monomer. Zn(2+) serves as cofactor.

The protein resides in the cytoplasm. It catalyses the reaction tRNA(Ile) + L-isoleucine + ATP = L-isoleucyl-tRNA(Ile) + AMP + diphosphate. Functionally, catalyzes the attachment of isoleucine to tRNA(Ile). As IleRS can inadvertently accommodate and process structurally similar amino acids such as valine, to avoid such errors it has two additional distinct tRNA(Ile)-dependent editing activities. One activity is designated as 'pretransfer' editing and involves the hydrolysis of activated Val-AMP. The other activity is designated 'posttransfer' editing and involves deacylation of mischarged Val-tRNA(Ile). In Acholeplasma laidlawii (strain PG-8A), this protein is Isoleucine--tRNA ligase.